The primary structure comprises 270 residues: ATP synthase subunit a (270 aa).

Helical transmembrane passes span 38–58 (VHID…GIFY), 98–118 (IAPL…MDLV), 143–163 (DVNI…YYSI), 208–228 (LFGN…MLPW), and 239–259 (AIFH…LTIV).

Belongs to the ATPase A chain family. In terms of assembly, F-type ATPases have 2 components, CF(1) - the catalytic core - and CF(0) - the membrane proton channel. CF(1) has five subunits: alpha(3), beta(3), gamma(1), delta(1), epsilon(1). CF(0) has three main subunits: a(1), b(2) and c(9-12). The alpha and beta chains form an alternating ring which encloses part of the gamma chain. CF(1) is attached to CF(0) by a central stalk formed by the gamma and epsilon chains, while a peripheral stalk is formed by the delta and b chains.

It is found in the cell inner membrane. Key component of the proton channel; it plays a direct role in the translocation of protons across the membrane. In Vibrio parahaemolyticus serotype O3:K6 (strain RIMD 2210633), this protein is ATP synthase subunit a.